Reading from the N-terminus, the 320-residue chain is tRNA (guanine(10)-N2)-dimethyltransferase (320 aa).

The 91-residue stretch at 46-136 (EKFFERLAYT…DDKCYVGLLE (91 aa)) folds into the THUMP domain.

It belongs to the methyltransferase superfamily. Trm-G10 family. As to quaternary structure, monomer.

The protein localises to the cytoplasm. It carries out the reaction guanosine(10) in tRNA + 2 S-adenosyl-L-methionine = N(2)-dimethylguanosine(10) in tRNA + 2 S-adenosyl-L-homocysteine + 2 H(+). Catalyzes the adenosylmethionine-dependent methylation of the exocyclic amino group (N(2)) of guanosine at position 10 of various tRNAs. Acts via a two-step process that leads to the formation of either N(2)-monomethyl (m(2)G) or N(2)-dimethylguanosine (m(2)(2)G). The polypeptide is tRNA (guanine(10)-N2)-dimethyltransferase (trmG10) (Archaeoglobus fulgidus (strain ATCC 49558 / DSM 4304 / JCM 9628 / NBRC 100126 / VC-16)).